A 485-amino-acid polypeptide reads, in one-letter code: NADH-quinone oxidoreductase subunit N (485 aa).

A run of 14 helical transmembrane segments spans residues 8–28, 35–55, 71–91, 105–125, 127–147, 159–179, 203–223, 235–255, 271–291, 297–317, 326–346, 373–393, 408–430, and 455–475; these read LIALLPLLIVGLTVVVVMLSI, FLNATLSVIGLNAALVSLWFV, GFAMLYTGLVLLASLATCTFA, FYLLVLIAALGGILLANANHL, SLFLGIELISLPLFGLVGYAF, YTILSAAASSFLLFGMALVYA, LLAGFGLMIVGLGFKLSLVPF, PAPVSTFLATASKIAIFGVVM, VVLAIIAFASIIFGNLMALSQ, LLGYSSISHLGYLLVALIALQ, VGVYLAGYLFSSLGAFGVVSL, AAVMTVMMLSLAGIPMTLGFI, WWLVGAVVVGSAIGLYYYLRVAV, and IVVLISALLVLVLGIWPQPLI.

The protein belongs to the complex I subunit 2 family. As to quaternary structure, NDH-1 is composed of 13 different subunits. Subunits NuoA, H, J, K, L, M, N constitute the membrane sector of the complex.

The protein resides in the cell inner membrane. It catalyses the reaction a quinone + NADH + 5 H(+)(in) = a quinol + NAD(+) + 4 H(+)(out). In terms of biological role, NDH-1 shuttles electrons from NADH, via FMN and iron-sulfur (Fe-S) centers, to quinones in the respiratory chain. The immediate electron acceptor for the enzyme in this species is believed to be ubiquinone. Couples the redox reaction to proton translocation (for every two electrons transferred, four hydrogen ions are translocated across the cytoplasmic membrane), and thus conserves the redox energy in a proton gradient. The sequence is that of NADH-quinone oxidoreductase subunit N from Escherichia coli O7:K1 (strain IAI39 / ExPEC).